Reading from the N-terminus, the 205-residue chain is Small ribosomal subunit protein uS4 (205 aa).

Residues 18–46 (NIWGRPKSPVNSRAYGPGQHGQRRKSKVS) are disordered. The region spanning 94-155 (SRLDAVVYRA…RSRNMALVLE (62 aa)) is the S4 RNA-binding domain.

This sequence belongs to the universal ribosomal protein uS4 family. Part of the 30S ribosomal subunit. Contacts protein S5. The interaction surface between S4 and S5 is involved in control of translational fidelity.

Functionally, one of the primary rRNA binding proteins, it binds directly to 16S rRNA where it nucleates assembly of the body of the 30S subunit. Its function is as follows. With S5 and S12 plays an important role in translational accuracy. The protein is Small ribosomal subunit protein uS4 of Phenylobacterium zucineum (strain HLK1).